Reading from the N-terminus, the 260-residue chain is 3'-5' ssDNA/RNA exonuclease TatD (260 aa).

Glutamate 92, histidine 128, and histidine 153 together coordinate a divalent metal cation.

It belongs to the metallo-dependent hydrolases superfamily. TatD-type hydrolase family. TatD subfamily. Monomer. The cofactor is Mg(2+).

The protein localises to the cytoplasm. 3'-5' exonuclease that prefers single-stranded DNA and RNA. May play a role in the H(2)O(2)-induced DNA damage repair. The protein is 3'-5' ssDNA/RNA exonuclease TatD of Pectobacterium atrosepticum (strain SCRI 1043 / ATCC BAA-672) (Erwinia carotovora subsp. atroseptica).